Reading from the N-terminus, the 317-residue chain is Malate dehydrogenase (317 aa).

Residues 7–13 (GAAGGIG) and Asp34 each bind NAD(+). Arg81 and Arg87 together coordinate substrate. NAD(+) is bound by residues Asn94 and 117-119 (VTN). Substrate contacts are provided by Asn119 and Arg153. Catalysis depends on His177, which acts as the Proton acceptor. Residue Met231 participates in NAD(+) binding.

It belongs to the LDH/MDH superfamily. MDH type 1 family. As to quaternary structure, homodimer.

The catalysed reaction is (S)-malate + NAD(+) = oxaloacetate + NADH + H(+). Catalyzes the reversible oxidation of malate to oxaloacetate. The chain is Malate dehydrogenase from Actinobacillus pleuropneumoniae serotype 7 (strain AP76).